Here is a 225-residue protein sequence, read N- to C-terminus: Phosphatidylserine decarboxylase proenzyme (225 aa).

The Schiff-base intermediate with substrate; via pyruvic acid role is filled by serine 188. Serine 188 bears the Pyruvic acid (Ser); by autocatalysis mark.

This sequence belongs to the phosphatidylserine decarboxylase family. PSD-A subfamily. In terms of assembly, heterodimer of a large membrane-associated beta subunit and a small pyruvoyl-containing alpha subunit. Pyruvate is required as a cofactor. Is synthesized initially as an inactive proenzyme. Formation of the active enzyme involves a self-maturation process in which the active site pyruvoyl group is generated from an internal serine residue via an autocatalytic post-translational modification. Two non-identical subunits are generated from the proenzyme in this reaction, and the pyruvate is formed at the N-terminus of the alpha chain, which is derived from the carboxyl end of the proenzyme. The post-translation cleavage follows an unusual pathway, termed non-hydrolytic serinolysis, in which the side chain hydroxyl group of the serine supplies its oxygen atom to form the C-terminus of the beta chain, while the remainder of the serine residue undergoes an oxidative deamination to produce ammonia and the pyruvoyl prosthetic group on the alpha chain.

Its subcellular location is the cell membrane. It carries out the reaction a 1,2-diacyl-sn-glycero-3-phospho-L-serine + H(+) = a 1,2-diacyl-sn-glycero-3-phosphoethanolamine + CO2. The protein operates within phospholipid metabolism; phosphatidylethanolamine biosynthesis; phosphatidylethanolamine from CDP-diacylglycerol: step 2/2. Functionally, catalyzes the formation of phosphatidylethanolamine (PtdEtn) from phosphatidylserine (PtdSer). In Parvibaculum lavamentivorans (strain DS-1 / DSM 13023 / NCIMB 13966), this protein is Phosphatidylserine decarboxylase proenzyme.